We begin with the raw amino-acid sequence, 293 residues long: MVSPDHEPMDDALRVSVLSEALPYIQRFAGRRIVVKYGGAAMVHAELQSAVFRDLALLRSVGVQPVVVHGGGPEINHWLKRLDIDPEFREGLRVTDAATMDVVEMVLVGRVNKQIVNGLNRLGARAVGLSGSDGCLVEARAWGDGSHGLVGDVARVNPDVLEPLLDRGYVPVISSVAANAEGVAHNINADTVAGELAAALEAEKLILLTDTPGILRDRESPESLIRQLKLSEARQLIDDGIVAGGMTPKTECCIRALAQGVSAAHIVDGRVAHALLLEVFTDAGIGTMVLGRS.

Substrate is bound by residues 71-72 (GG), Arg-93, and Asn-186.

The protein belongs to the acetylglutamate kinase family. ArgB subfamily.

The protein localises to the cytoplasm. It carries out the reaction N-acetyl-L-glutamate + ATP = N-acetyl-L-glutamyl 5-phosphate + ADP. It participates in amino-acid biosynthesis; L-arginine biosynthesis; N(2)-acetyl-L-ornithine from L-glutamate: step 2/4. Catalyzes the ATP-dependent phosphorylation of N-acetyl-L-glutamate. In Synechococcus sp. (strain WH7803), this protein is Acetylglutamate kinase.